Here is a 184-residue protein sequence, read N- to C-terminus: Cathelicidin-related peptide Pt_CRAMP1 (184 aa).

The signal sequence occupies residues 1-22; the sequence is MEGFFWKTWLVVAAFAIGGTSS. Residues 23 to 150 constitute a propeptide that is removed on maturation; that stretch reads LPHKPLTYEE…EDEKDQPRRV (128 aa). Cystine bridges form between Cys-81/Cys-92 and Cys-103/Cys-120. Positions 125-144 are enriched in acidic residues; sequence EDEEQNQEEEEEEEKEEDEK. Residues 125-147 form a disordered region; the sequence is EDEEQNQEEEEEEEKEEDEKDQP.

Belongs to the cathelicidin family. In terms of tissue distribution, expressed by the venom gland.

It is found in the secreted. The protein resides in the target cell membrane. Potent antimicrobial peptide against Gram-negative (MIC=2 ug/ml against E.coli ATCC 25922, MIC=8 ug/ml against P.aeruginosa) and Gram-positive bacteria (MIC=32 ug/ml against E.faecalis, MIC=32 ug/ml against S.aureus). Adopts an amphipathic alpha helical conformation, that may allow to partition into the target membrane. High hemolytic activities have been observed on mammalian cells. This Pseudonaja textilis (Eastern brown snake) protein is Cathelicidin-related peptide Pt_CRAMP1.